We begin with the raw amino-acid sequence, 70 residues long: Exodeoxyribonuclease 7 small subunit (70 aa).

It belongs to the XseB family. As to quaternary structure, heterooligomer composed of large and small subunits.

It is found in the cytoplasm. The catalysed reaction is Exonucleolytic cleavage in either 5'- to 3'- or 3'- to 5'-direction to yield nucleoside 5'-phosphates.. Functionally, bidirectionally degrades single-stranded DNA into large acid-insoluble oligonucleotides, which are then degraded further into small acid-soluble oligonucleotides. The protein is Exodeoxyribonuclease 7 small subunit of Streptococcus sanguinis (strain SK36).